Here is a 248-residue protein sequence, read N- to C-terminus: DNA repair protein RecO (248 aa).

The protein belongs to the RecO family.

Involved in DNA repair and RecF pathway recombination. This chain is DNA repair protein RecO, found in Oleidesulfovibrio alaskensis (strain ATCC BAA-1058 / DSM 17464 / G20) (Desulfovibrio alaskensis).